The following is a 475-amino-acid chain: Ribulose bisphosphate carboxylase large chain (475 aa).

Residues 1-2 constitute a propeptide that is removed on maturation; that stretch reads MS. The residue at position 3 (P3) is an N-acetylproline. The residue at position 14 (K14) is an N6,N6,N6-trimethyllysine. Residues N123 and T173 each contribute to the substrate site. The active-site Proton acceptor is the K175. Residue K177 coordinates substrate. Mg(2+) contacts are provided by K201, D203, and E204. The residue at position 201 (K201) is an N6-carboxylysine. H294 acts as the Proton acceptor in catalysis. Substrate-binding residues include R295, H327, and S379.

Belongs to the RuBisCO large chain family. Type I subfamily. As to quaternary structure, heterohexadecamer of 8 large chains and 8 small chains; disulfide-linked. The disulfide link is formed within the large subunit homodimers. The cofactor is Mg(2+). The disulfide bond which can form in the large chain dimeric partners within the hexadecamer appears to be associated with oxidative stress and protein turnover.

Its subcellular location is the plastid. It localises to the chloroplast. It catalyses the reaction 2 (2R)-3-phosphoglycerate + 2 H(+) = D-ribulose 1,5-bisphosphate + CO2 + H2O. The enzyme catalyses D-ribulose 1,5-bisphosphate + O2 = 2-phosphoglycolate + (2R)-3-phosphoglycerate + 2 H(+). Functionally, ruBisCO catalyzes two reactions: the carboxylation of D-ribulose 1,5-bisphosphate, the primary event in carbon dioxide fixation, as well as the oxidative fragmentation of the pentose substrate in the photorespiration process. Both reactions occur simultaneously and in competition at the same active site. The polypeptide is Ribulose bisphosphate carboxylase large chain (Angiopteris lygodiifolia (Turnip fern)).